We begin with the raw amino-acid sequence, 726 residues long: Catalase-peroxidase (726 aa).

A cross-link (tryptophyl-tyrosyl-methioninium (Trp-Tyr) (with M-250)) is located at residues 96-224; that stretch reads WHSAGTYRIA…LAAVMMGLIY (129 aa). The active-site Proton acceptor is the H97. The tryptophyl-tyrosyl-methioninium (Tyr-Met) (with W-96) cross-link spans 224-250; sequence YVNPEGVDGKPDPLKTAHDMRVTFARM. H265 serves as a coordination point for heme b.

This sequence belongs to the peroxidase family. Peroxidase/catalase subfamily. In terms of assembly, homodimer or homotetramer. Requires heme b as cofactor. Post-translationally, formation of the three residue Trp-Tyr-Met cross-link is important for the catalase, but not the peroxidase activity of the enzyme.

The catalysed reaction is H2O2 + AH2 = A + 2 H2O. The enzyme catalyses 2 H2O2 = O2 + 2 H2O. Its function is as follows. Bifunctional enzyme with both catalase and broad-spectrum peroxidase activity. The polypeptide is Catalase-peroxidase (Vibrio campbellii (strain ATCC BAA-1116)).